A 267-amino-acid polypeptide reads, in one-letter code: Urease accessory protein UreD 2 (267 aa).

This sequence belongs to the UreD family. In terms of assembly, ureD, UreF and UreG form a complex that acts as a GTP-hydrolysis-dependent molecular chaperone, activating the urease apoprotein by helping to assemble the nickel containing metallocenter of UreC. The UreE protein probably delivers the nickel.

It is found in the cytoplasm. Required for maturation of urease via the functional incorporation of the urease nickel metallocenter. This is Urease accessory protein UreD 2 from Synechococcus sp. (strain JA-3-3Ab) (Cyanobacteria bacterium Yellowstone A-Prime).